A 495-amino-acid polypeptide reads, in one-letter code: UDP-N-acetylmuramoyl-L-alanyl-D-glutamate--2,6-diaminopimelate ligase (495 aa).

Position 29 (Ser29) interacts with UDP-N-acetyl-alpha-D-muramoyl-L-alanyl-D-glutamate. Position 111-117 (111-117 (GTNGKTS)) interacts with ATP. Residues 153 to 154 (TT), Ser180, Gln186, and Arg188 each bind UDP-N-acetyl-alpha-D-muramoyl-L-alanyl-D-glutamate. Lys220 is subject to N6-carboxylysine. Residues Arg384, 408-411 (DNPR), Gly459, and Glu463 contribute to the meso-2,6-diaminopimelate site. The Meso-diaminopimelate recognition motif signature appears at 408 to 411 (DNPR).

Belongs to the MurCDEF family. MurE subfamily. It depends on Mg(2+) as a cofactor. Post-translationally, carboxylation is probably crucial for Mg(2+) binding and, consequently, for the gamma-phosphate positioning of ATP.

It is found in the cytoplasm. It carries out the reaction UDP-N-acetyl-alpha-D-muramoyl-L-alanyl-D-glutamate + meso-2,6-diaminopimelate + ATP = UDP-N-acetyl-alpha-D-muramoyl-L-alanyl-gamma-D-glutamyl-meso-2,6-diaminopimelate + ADP + phosphate + H(+). It functions in the pathway cell wall biogenesis; peptidoglycan biosynthesis. In terms of biological role, catalyzes the addition of meso-diaminopimelic acid to the nucleotide precursor UDP-N-acetylmuramoyl-L-alanyl-D-glutamate (UMAG) in the biosynthesis of bacterial cell-wall peptidoglycan. The polypeptide is UDP-N-acetylmuramoyl-L-alanyl-D-glutamate--2,6-diaminopimelate ligase (Xylella fastidiosa (strain Temecula1 / ATCC 700964)).